A 327-amino-acid polypeptide reads, in one-letter code: Probable cell division protein WhiA (327 aa).

Residues 275 to 308 (SLEELGRLADPPMTKDAVAGRIRRLLSMADRKAK) constitute a DNA-binding region (H-T-H motif).

It belongs to the WhiA family.

Its function is as follows. Involved in cell division and chromosome segregation. In Mycobacterium marinum (strain ATCC BAA-535 / M), this protein is Probable cell division protein WhiA.